We begin with the raw amino-acid sequence, 120 residues long: Mating factor alpha-2 (120 aa).

A signal peptide spans Met-1–Ser-21. 2 consecutive propeptides follow at residues Asp-22–Ala-86 and Glu-102–Ala-107.

Functionally, the active factor is excreted into the culture medium by haploid cells of the alpha mating type and acts on cells of the opposite mating type (type A). It mediates the conjugation process between the two types by inhibiting the initiation of DNA synthesis in type a cells and synchronizing them with type alpha. This is Mating factor alpha-2 (MF(ALPHA)2) from Saccharomyces cerevisiae (strain ATCC 204508 / S288c) (Baker's yeast).